The chain runs to 428 residues: Elongation factor 1-alpha (428 aa).

One can recognise a tr-type G domain in the interval 5 to 225; sequence KPILNVAFIG…DAFQPPEKPT (221 aa). Positions 14–21 are G1; sequence GHVDAGKS. Residue 14 to 21 coordinates GTP; it reads GHVDAGKS. A Mg(2+)-binding site is contributed by Ser21. Positions 70–74 are G2; the sequence is GVTID. Positions 91 to 94 are G3; sequence DCPG. GTP is bound by residues 91 to 95 and 149 to 152; these read DCPGH and NKMD. The G4 stretch occupies residues 149–152; it reads NKMD. Positions 189-191 are G5; the sequence is ASL.

Belongs to the TRAFAC class translation factor GTPase superfamily. Classic translation factor GTPase family. EF-Tu/EF-1A subfamily.

It is found in the cytoplasm. It catalyses the reaction GTP + H2O = GDP + phosphate + H(+). Functionally, GTP hydrolase that promotes the GTP-dependent binding of aminoacyl-tRNA to the A-site of ribosomes during protein biosynthesis. The chain is Elongation factor 1-alpha from Methanococcus maripaludis (strain C6 / ATCC BAA-1332).